The sequence spans 238 residues: Dolichyldiphosphatase 1 (238 aa).

The next 4 membrane-spanning stretches (helical) occupy residues 33-53 (LAYL…LIIF), 100-120 (PSSH…FLYL), 130-150 (FLDL…AFLV), and 162-182 (WSQV…WFII).

Belongs to the dolichyldiphosphatase family. In terms of tissue distribution, widely expressed with highest levels in brain, kidney, lung and intestine.

It localises to the endoplasmic reticulum membrane. The enzyme catalyses a di-trans,poly-cis-dolichyl diphosphate + H2O = a di-trans,poly-cis-dolichyl phosphate + phosphate + H(+). It participates in protein modification; protein glycosylation. Its function is as follows. Required for efficient N-glycosylation. Necessary for maintaining optimal levels of dolichol-linked oligosaccharides. Hydrolyzes dolichyl pyrophosphate at a very high rate and dolichyl monophosphate at a much lower rate. Does not act on phosphatidate. The protein is Dolichyldiphosphatase 1 (Dolpp1) of Mus musculus (Mouse).